Reading from the N-terminus, the 282-residue chain is Formate channel FocB (282 aa).

Residues 1–35 lie on the Cytoplasmic side of the membrane; sequence MRNKLSFDLQLSARKAAIAERIAAHKIARSKVSVF. The chain crosses the membrane as a helical span at residues 36–56; the sequence is LMAMSAGVFMAIGFTFYLSVI. Topologically, residues 57 to 68 are periplasmic; sequence ADAPSSQALTHL. The chain crosses the membrane as a helical span at residues 69–89; it reads VGGLCFTLGFILLAVCGTSLF. At 90–112 the chain is on the cytoplasmic side; it reads TSSVMTVMAKSRGVISWRTWLIN. A helical transmembrane segment spans residues 113–133; it reads ALLVACGNLAGIACFSLLIWF. Residues 134–163 are Periplasmic-facing; it reads SGLVMSENAMWGVAVLHCAEGKMHHTFTES. Residues 164–184 traverse the membrane as a helical segment; the sequence is VSLGIMCNLMVCLALWMSYCG. The Cytoplasmic segment spans residues 185 to 190; sequence RSLCDK. Residues 191–211 traverse the membrane as a helical segment; that stretch reads IVAMILPITLFVASGFEHCIA. Topologically, residues 212-248 are periplasmic; the sequence is NLFVIPFAIAIRHFAPPPFWQLAHSSADNFPALTVSH. A helical membrane pass occupies residues 249–269; sequence FITANLLPVMLGNIIGGAVLV. Residues 270-282 are Cytoplasmic-facing; it reads SMCYRAIYLRQEP.

It belongs to the FNT transporter (TC 1.A.16) family.

Its subcellular location is the cell inner membrane. It catalyses the reaction formate(in) = formate(out). With respect to regulation, the direction of formate translocation depends on external pH and electron donor source. Functionally, involved in the bidirectional transport of formate during mixed-acid fermentation. This chain is Formate channel FocB, found in Escherichia coli (strain K12).